Reading from the N-terminus, the 79-residue chain is Small integral membrane protein 40 (79 aa).

A helical membrane pass occupies residues Phe35–Leu55.

Its subcellular location is the membrane. This chain is Small integral membrane protein 40, found in Homo sapiens (Human).